The sequence spans 290 residues: Diaminopimelate epimerase (290 aa).

Asn-14 and Asn-67 together coordinate substrate. Cys-76 serves as the catalytic Proton donor. Substrate-binding positions include 77-78 (GN), Asn-166, Asn-199, and 217-218 (ER). Cys-226 acts as the Proton acceptor in catalysis. 227–228 (GT) contributes to the substrate binding site.

Belongs to the diaminopimelate epimerase family. In terms of assembly, homodimer.

Its subcellular location is the cytoplasm. It catalyses the reaction (2S,6S)-2,6-diaminopimelate = meso-2,6-diaminopimelate. It functions in the pathway amino-acid biosynthesis; L-lysine biosynthesis via DAP pathway; DL-2,6-diaminopimelate from LL-2,6-diaminopimelate: step 1/1. Its function is as follows. Catalyzes the stereoinversion of LL-2,6-diaminopimelate (L,L-DAP) to meso-diaminopimelate (meso-DAP), a precursor of L-lysine and an essential component of the bacterial peptidoglycan. The sequence is that of Diaminopimelate epimerase from Geobacillus kaustophilus (strain HTA426).